Here is a 565-residue protein sequence, read N- to C-terminus: Oxygen-dependent choline dehydrogenase (565 aa).

Aspartate 6–glutamate 35 serves as a coordination point for FAD. Histidine 475 serves as the catalytic Proton acceptor.

It belongs to the GMC oxidoreductase family. FAD serves as cofactor.

The catalysed reaction is choline + A = betaine aldehyde + AH2. The enzyme catalyses betaine aldehyde + NAD(+) + H2O = glycine betaine + NADH + 2 H(+). It participates in amine and polyamine biosynthesis; betaine biosynthesis via choline pathway; betaine aldehyde from choline (cytochrome c reductase route): step 1/1. Its function is as follows. Involved in the biosynthesis of the osmoprotectant glycine betaine. Catalyzes the oxidation of choline to betaine aldehyde and betaine aldehyde to glycine betaine at the same rate. The chain is Oxygen-dependent choline dehydrogenase from Pseudomonas putida (strain ATCC 700007 / DSM 6899 / JCM 31910 / BCRC 17059 / LMG 24140 / F1).